The chain runs to 248 residues: Transcription factor Spi-C (248 aa).

A DNA-binding region (ETS) is located at residues Leu111–Ser194.

The protein belongs to the ETS family. Binds DNA as a monomer.

The protein localises to the nucleus. In terms of biological role, controls the development of red pulp macrophages required for red blood cells recycling and iron homeostasis. Transcription factor that binds to the PU-box, a purine-rich DNA sequence (5'-GAGGA[AT]-3') that can act as a lymphoid-specific enhancer. Regulates VCAM1 gene expression. This is Transcription factor Spi-C (SPIC) from Bos taurus (Bovine).